The chain runs to 82 residues: Large ribosomal subunit protein uL24c (82 aa).

The protein belongs to the universal ribosomal protein uL24 family. Part of the 50S ribosomal subunit.

It localises to the plastid. The protein localises to the chloroplast. Its function is as follows. One of two assembly initiator proteins, it binds directly to the 5'-end of the 23S rRNA, where it nucleates assembly of the 50S subunit. This chain is Large ribosomal subunit protein uL24c (rpl24), found in Phaeodactylum tricornutum (strain CCAP 1055/1).